A 986-amino-acid polypeptide reads, in one-letter code: Resact receptor (986 aa).

A signal peptide spans 1 to 21 (MATTRLLFLLVVAVMITMVRS). Over 22–507 (ATLHYNPTVI…GELCTNWGLY (486 aa)) the chain is Extracellular. N-linked (GlcNAc...) asparagine glycosylation is found at Asn185, Asn361, and Asn410. The chain crosses the membrane as a helical span at residues 508–528 (LGTLIPAFIIIFGGGLGYYIY). Residues 529 to 986 (RKRAYEAALD…SHSCSALHSS (458 aa)) are Cytoplasmic-facing. Residues 568-836 (LSAISVISNA…PNIIEVRTML (269 aa)) enclose the Protein kinase domain.

The protein resides in the membrane. The catalysed reaction is GTP = 3',5'-cyclic GMP + diphosphate. Implicated as a cell-surface receptor on spermatozoa for 'resact' a chemotactic peptide, and on various other cells as a receptor for atrial natriuretic peptide. In Arbacia punctulata (Punctuate sea urchin), this protein is Resact receptor.